The following is a 150-amino-acid chain: UPF0178 protein Sbal_1771 (150 aa).

This sequence belongs to the UPF0178 family.

The protein is UPF0178 protein Sbal_1771 of Shewanella baltica (strain OS155 / ATCC BAA-1091).